A 500-amino-acid chain; its full sequence is L-arabinose isomerase (500 aa).

Glu-306, Glu-333, His-350, and His-450 together coordinate Mn(2+).

The protein belongs to the arabinose isomerase family. In terms of assembly, homohexamer. It depends on Mn(2+) as a cofactor.

It catalyses the reaction beta-L-arabinopyranose = L-ribulose. The protein operates within carbohydrate degradation; L-arabinose degradation via L-ribulose; D-xylulose 5-phosphate from L-arabinose (bacterial route): step 1/3. Functionally, catalyzes the conversion of L-arabinose to L-ribulose. The protein is L-arabinose isomerase of Yersinia pseudotuberculosis serotype O:3 (strain YPIII).